Consider the following 301-residue polypeptide: Nucleotide-binding protein Noca_2527 (301 aa).

26–33 lines the ATP pocket; the sequence is GMTGAGRS. Residue 77-80 coordinates GTP; the sequence is DVRS.

Belongs to the RapZ-like family.

Displays ATPase and GTPase activities. This is Nucleotide-binding protein Noca_2527 from Nocardioides sp. (strain ATCC BAA-499 / JS614).